Reading from the N-terminus, the 361-residue chain is Queuine tRNA-ribosyltransferase (361 aa).

Catalysis depends on Asp92, which acts as the Proton acceptor. Substrate-binding positions include 92–96, Asp146, Gln189, and Gly216; that span reads DSGGF. The RNA binding stretch occupies residues 247-253; it reads GVGKPAD. The active-site Nucleophile is the Asp266. The segment at 271–275 is RNA binding; important for wobble base 34 recognition; sequence TRSGR. Zn(2+) is bound by residues Cys304, Cys306, Cys309, and His335.

The protein belongs to the queuine tRNA-ribosyltransferase family. In terms of assembly, homodimer. Within each dimer, one monomer is responsible for RNA recognition and catalysis, while the other monomer binds to the replacement base PreQ1. Zn(2+) serves as cofactor.

It catalyses the reaction 7-aminomethyl-7-carbaguanine + guanosine(34) in tRNA = 7-aminomethyl-7-carbaguanosine(34) in tRNA + guanine. The protein operates within tRNA modification; tRNA-queuosine biosynthesis. Its function is as follows. Catalyzes the base-exchange of a guanine (G) residue with the queuine precursor 7-aminomethyl-7-deazaguanine (PreQ1) at position 34 (anticodon wobble position) in tRNAs with GU(N) anticodons (tRNA-Asp, -Asn, -His and -Tyr). Catalysis occurs through a double-displacement mechanism. The nucleophile active site attacks the C1' of nucleotide 34 to detach the guanine base from the RNA, forming a covalent enzyme-RNA intermediate. The proton acceptor active site deprotonates the incoming PreQ1, allowing a nucleophilic attack on the C1' of the ribose to form the product. After dissociation, two additional enzymatic reactions on the tRNA convert PreQ1 to queuine (Q), resulting in the hypermodified nucleoside queuosine (7-(((4,5-cis-dihydroxy-2-cyclopenten-1-yl)amino)methyl)-7-deazaguanosine). This chain is Queuine tRNA-ribosyltransferase, found in Rickettsia felis (strain ATCC VR-1525 / URRWXCal2) (Rickettsia azadi).